The following is a 1021-amino-acid chain: MKTPLLVSHLLLISLTSCLGEFTWHRRYGHGVSEEDKGFGPIFEEQPINTIYPEESLEGKVSLNCRARASPFPVYKWRMNNGDVDLTNDRYSMVGGNLVINNPDKQKDAGIYYCLASNNYGMVRSTEATLSFGYLDPFPPEDRPEVKVKEGKGMVLLCDPPYHFPDDLSYRWLLNEFPVFITMDKRRFVSQTNGNLYIANVESSDRGNYSCFVSSPSITKSVFSKFIPLIPIPERTTKPYPADIVVQFKDIYTMMGQNVTLECFALGNPVPDIRWRKVLEPMPTTAEISTSGAVLKIFNIQLEDEGLYECEAENIRGKDKHQARIYVQAFPEWVEHINDTEVDIGSDLYWPCVATGKPIPTIRWLKNGYAYHKGELRLYDVTFENAGMYQCIAENAYGTIYANAELKILALAPTFEMNPMKKKILAAKGGRVIIECKPKAAPKPKFSWSKGTEWLVNSSRILIWEDGSLEINNITRNDGGIYTCFAENNRGKANSTGTLVITNPTRIILAPINADITVGENATMQCAASFDPSLDLTFVWSFNGYVIDFNKEITNIHYQRNFMLDANGELLIRNAQLKHAGRYTCTAQTIVDNSSASADLVVRGPPGPPGGLRIEDIRATSVALTWSRGSDNHSPISKYTIQTKTILSDDWKDAKTDPPIIEGNMESAKAVDLIPWMEYEFRVVATNTLGTGEPSIPSNRIKTDGAAPNVAPSDVGGGGGTNRELTITWAPLSREYHYGNNFGYIVAFKPFDGEEWKKVTVTNPDTGRYVHKDETMTPSTAFQVKVKAFNNKGDGPYSLIAVINSAQDAPSEAPTEVGVKVLSSSEISVHWKHVLEKIVESYQIRYWAGHDKEAAAHRVQVTSQEYSARLENLLPDTQYFIEVGACNSAGCGPSSDVIETFTRKAPPSQPPRIISSVRSGSRYIITWDHVVALSNESTVTGYKILYRPDGQHDGKLFSTHKHSIEVPIPRDGEYVVEVRAHSDGGDGVVSQVKISGVSTLSSGLLSLLLPSLGFLVFYSEF.

The signal sequence occupies residues 1 to 20; that stretch reads MKTPLLVSHLLLISLTSCLG. 6 consecutive Ig-like C2-type domains span residues 41-131, 137-223, 241-326, 331-407, 413-500, and 504-603; these read PIFE…ATLS, PFPP…KSVF, PADI…ARIY, PEWV…AELK, PTFE…GTLV, and PTRI…LVVR. 2 disulfides stabilise this stretch: C65–C114 and C158–C211. N208 and N258 each carry an N-linked (GlcNAc...) asparagine glycan. A disulfide bond links C263 and C310. N338 is a glycosylation site (N-linked (GlcNAc...) asparagine). 2 disulfide bridges follow: C352/C391 and C436/C484. N-linked (GlcNAc...) asparagine glycans are attached at residues N457, N473, N494, and N521. C526 and C585 form a disulfide bridge. A glycan (N-linked (GlcNAc...) asparagine) is linked at N593. Fibronectin type-III domains lie at 608–706, 711–808, 813–908, and 909–1002; these read PPGG…TDGA, APSD…SAQD, APTE…APPS, and QPPR…TLSS. Residues 695 to 719 are disordered; sequence SIPSNRIKTDGAAPNVAPSDVGGGG. Residue N935 is glycosylated (N-linked (GlcNAc...) asparagine). Residue S1001 is the site of GPI-anchor amidated serine attachment. Positions 1002–1021 are cleaved as a propeptide — removed in mature form; it reads SGLLSLLLPSLGFLVFYSEF.

It belongs to the immunoglobulin superfamily. Contactin family. In terms of assembly, monomer. Interacts with NOTCH1. Interacts with CNTNAP1 in cis form and TNR. Binds to the carbonic-anhydrase like domain of PTPRZ1. Detected in a complex with NRCAM and PTPRB. Interacts with TASOR. As to expression, expressed by neurons, oligodendrocytes and their progenitors (at protein level). Myelination regulates the expression being down-regulated when neurons are in contact with Schwann cells.

It localises to the cell membrane. Its function is as follows. Contactins mediate cell surface interactions during nervous system development. Involved in the formation of paranodal axo-glial junctions in myelinated peripheral nerves and in the signaling between axons and myelinating glial cells via its association with CNTNAP1. Participates in oligodendrocytes generation by acting as a ligand of NOTCH1. Its association with NOTCH1 promotes NOTCH1 activation through the released notch intracellular domain (NICD) and subsequent translocation to the nucleus. Interaction with TNR induces a repulsion of neurons and an inhibition of neurite outgrowth. The sequence is that of Contactin-1 (Cntn1) from Rattus norvegicus (Rat).